Consider the following 891-residue polypeptide: Targeting protein for Xklp2 homolog (891 aa).

The span at 42–54 shows a compositional bias: basic and acidic residues; sequence HENGVPLTFDDKA. 5 disordered regions span residues 42–310, 418–454, 472–518, 723–746, and 789–891; these read HENG…KSCP, NLRK…SFSG, HTKT…NRHR, CSGV…AEKG, and STKP…SHTS. The span at 108–124 shows a compositional bias: polar residues; that stretch reads DDVSSAESETCEMSTDS. A compositionally biased stretch (acidic residues) spans 141 to 154; it reads DDEATVQESSDAEE. Positions 155 to 173 are enriched in polar residues; the sequence is TQTLPSSCVDSSTAEMSTD. The segment covering 236–246 has biased composition (basic residues); sequence PTRKSPRLHSR. Over residues 442-454 the composition is skewed to basic and acidic residues; the sequence is DNRKRTHEESFSG. Positions 791 to 802 are enriched in polar residues; sequence KPMTDISNFSLN. Basic and acidic residues-rich tracts occupy residues 803–822 and 831–852; these read TERR…ERQL and REAE…DSIH.

The protein belongs to the TPX2 family. As to expression, detectable in immature oocytes.

The protein resides in the nucleus. It localises to the cytoplasm. The protein localises to the cytoskeleton. Its subcellular location is the spindle. Functionally, spindle assembly factor. Required for normal assembly of mitotic spindles. This Patiria pectinifera (Starfish) protein is Targeting protein for Xklp2 homolog.